Consider the following 429-residue polypeptide: Ribosomal RNA small subunit methyltransferase B (429 aa).

S-adenosyl-L-methionine is bound by residues 254–260, aspartate 277, aspartate 303, and aspartate 322; that span reads CAAPGGK. Cysteine 375 acts as the Nucleophile in catalysis. The disordered stretch occupies residues 397–419; sequence ALSETGTPDQPGQQNLPGGEEGD. Positions 400 to 412 are enriched in polar residues; it reads ETGTPDQPGQQNL.

The protein belongs to the class I-like SAM-binding methyltransferase superfamily. RsmB/NOP family.

Its subcellular location is the cytoplasm. It catalyses the reaction cytidine(967) in 16S rRNA + S-adenosyl-L-methionine = 5-methylcytidine(967) in 16S rRNA + S-adenosyl-L-homocysteine + H(+). Functionally, specifically methylates the cytosine at position 967 (m5C967) of 16S rRNA. In Salmonella heidelberg (strain SL476), this protein is Ribosomal RNA small subunit methyltransferase B.